The following is a 524-amino-acid chain: Rho guanine nucleotide exchange factor 3 (524 aa).

2 positions are modified to phosphoserine: Ser46 and Ser69. In terms of domain architecture, DH spans 121–303 (KRQEAIFELS…QGIVAEINTK (183 aa)). In terms of domain architecture, PH spans 290-448 (INIIQGIVAE…WLNCIRQAKE (159 aa)). Residues 461–524 (DSEGLVQGPG…CANSRPEESV (64 aa)) are disordered. Basic and acidic residues predominate over residues 472–484 (ENREPQGETKLEQ).

In terms of assembly, interacts with RHOA and RHOB.

It localises to the cytoplasm. Functionally, acts as a guanine nucleotide exchange factor (GEF) for RhoA and RhoB GTPases. This is Rho guanine nucleotide exchange factor 3 (Arhgef3) from Mus musculus (Mouse).